The primary structure comprises 666 residues: Pantothenate kinase 1 (666 aa).

This sequence belongs to the type II pantothenate kinase family.

It catalyses the reaction (R)-pantothenate + ATP = (R)-4'-phosphopantothenate + ADP + H(+). Its pathway is cofactor biosynthesis; coenzyme A biosynthesis; CoA from (R)-pantothenate: step 1/5. With respect to regulation, regulated by feedback inhibition by malonyl-CoA. Its function is as follows. Catalyzes the phosphorylation of pantothenate the first step in CoA biosynthesis. May play a role in the physiological regulation of the intracellular CoA concentration. The chain is Pantothenate kinase 1 from Oryza sativa subsp. japonica (Rice).